We begin with the raw amino-acid sequence, 37 residues long: Large ribosomal subunit protein bL36 (37 aa).

Belongs to the bacterial ribosomal protein bL36 family.

The protein is Large ribosomal subunit protein bL36 of Micrococcus luteus (strain ATCC 4698 / DSM 20030 / JCM 1464 / CCM 169 / CCUG 5858 / IAM 1056 / NBRC 3333 / NCIMB 9278 / NCTC 2665 / VKM Ac-2230) (Micrococcus lysodeikticus).